Reading from the N-terminus, the 529-residue chain is Peptide chain release factor 3 (529 aa).

A tr-type G domain is found at 11–280 (AKRRTFAIIS…GLVEWAPAPM (270 aa)). GTP-binding positions include 20–27 (SHPDAGKT), 88–92 (DTPGH), and 142–145 (NKLD).

Belongs to the TRAFAC class translation factor GTPase superfamily. Classic translation factor GTPase family. PrfC subfamily.

It is found in the cytoplasm. Its function is as follows. Increases the formation of ribosomal termination complexes and stimulates activities of RF-1 and RF-2. It binds guanine nucleotides and has strong preference for UGA stop codons. It may interact directly with the ribosome. The stimulation of RF-1 and RF-2 is significantly reduced by GTP and GDP, but not by GMP. The protein is Peptide chain release factor 3 of Klebsiella pneumoniae subsp. pneumoniae (strain ATCC 700721 / MGH 78578).